Reading from the N-terminus, the 181-residue chain is 6,7-dimethyl-8-ribityllumazine synthase (181 aa).

Residues phenylalanine 24, 62–64, and 86–88 contribute to the 5-amino-6-(D-ribitylamino)uracil site; these read SFE and AII. Residue 91–92 participates in (2S)-2-hydroxy-3-oxobutyl phosphate binding; that stretch reads QT. The active-site Proton donor is histidine 94. A 5-amino-6-(D-ribitylamino)uracil-binding site is contributed by phenylalanine 119. Arginine 133 lines the (2S)-2-hydroxy-3-oxobutyl phosphate pocket.

Belongs to the DMRL synthase family.

The catalysed reaction is (2S)-2-hydroxy-3-oxobutyl phosphate + 5-amino-6-(D-ribitylamino)uracil = 6,7-dimethyl-8-(1-D-ribityl)lumazine + phosphate + 2 H2O + H(+). It participates in cofactor biosynthesis; riboflavin biosynthesis; riboflavin from 2-hydroxy-3-oxobutyl phosphate and 5-amino-6-(D-ribitylamino)uracil: step 1/2. Its function is as follows. Catalyzes the formation of 6,7-dimethyl-8-ribityllumazine by condensation of 5-amino-6-(D-ribitylamino)uracil with 3,4-dihydroxy-2-butanone 4-phosphate. This is the penultimate step in the biosynthesis of riboflavin. The protein is 6,7-dimethyl-8-ribityllumazine synthase of Microcystis aeruginosa (strain NIES-843 / IAM M-2473).